We begin with the raw amino-acid sequence, 60 residues long: Large ribosomal subunit protein bL32 (60 aa).

Over residues 1–23 (MAKHPVPKKKTSKSKRDMRRSHH) the composition is skewed to basic residues. Residues 1–26 (MAKHPVPKKKTSKSKRDMRRSHHALT) form a disordered region.

It belongs to the bacterial ribosomal protein bL32 family.

In Deinococcus deserti (strain DSM 17065 / CIP 109153 / LMG 22923 / VCD115), this protein is Large ribosomal subunit protein bL32.